Consider the following 502-residue polypeptide: Hippocampus abundant transcript-like protein 1 (502 aa).

Residues 1-12 are compositionally biased toward basic and acidic residues; that stretch reads MNAEPPEEKAAS. Positions 1-27 are disordered; that stretch reads MNAEPPEEKAASEAEAGAMPEKRAGSR. Topologically, residues 1–46 are extracellular; that stretch reads MNAEPPEEKAASEAEAGAMPEKRAGSRAAGGNSLQGFGRPSVYHAA. Residues 47-67 traverse the membrane as a helical segment; it reads IVIFLEFFAWGLLTTSMLTVL. Residues 68–79 are Cytoplasmic-facing; the sequence is HETFPQHTFLMN. The chain crosses the membrane as a helical span at residues 80–100; that stretch reads GLIQGVKGLLSFLSAPLIGAL. At 101 to 108 the chain is on the extracellular side; that stretch reads SDVWGRKP. A helical transmembrane segment spans residues 109-129; that stretch reads FLLGTVFFTCFPIPLMRISPW. Topologically, residues 130 to 131 are cytoplasmic; that stretch reads WY. The helical transmembrane segment at 132–152 threads the bilayer; sequence FAMISISGVFSVTFSVIFAYV. The Extracellular portion of the chain corresponds to 153–165; sequence ADVTQEHERSTAY. A helical transmembrane segment spans residues 166-186; the sequence is GWVSATFAASLVSSPAIGAYL. Over 187–193 the chain is Cytoplasmic; that stretch reads SASYGDS. A helical transmembrane segment spans residues 194 to 214; sequence LVVLVATVVALLDICFILLAV. Residues 215 to 248 are Extracellular-facing; that stretch reads PESLPEKMRPLSWGARISWKQADPFASLKKVGKD. A helical transmembrane segment spans residues 249–269; sequence STILLICITVFLSYLPEAGQY. The Cytoplasmic portion of the chain corresponds to 270 to 278; the sequence is SSFFLYLRQ. Residues 279-299 form a helical membrane-spanning segment; that stretch reads VIGFGSIKIAAFIAMVGILSI. The Extracellular segment spans residues 300–316; that stretch reads VAQTVFLTSLMRSLGNK. Residues 317 to 337 traverse the membrane as a helical segment; it reads NTVLLGLGFQMFQLAWYGFGS. Gln-338 is a topological domain (cytoplasmic). Residues 339–359 form a helical membrane-spanning segment; sequence AWMMWAAGIVAAVSSITFPAV. The Extracellular segment spans residues 360–384; the sequence is STLVSQNADSNQQGVAQGIITGIRG. The helical transmembrane segment at 385 to 405 threads the bilayer; the sequence is LCNGLGPALYGFIFYMFHVEL. The Cytoplasmic portion of the chain corresponds to 406-425; it reads TELEPELISNNAALQGAVIP. Residues 426-446 traverse the membrane as a helical segment; the sequence is GPPFLFGACIVFMSFLVAVFI. At 447 to 502 the chain is on the extracellular side; that stretch reads PEYSKGGIQKHSNSISGSLANTPERGSDEDIEPLLQDSSIWELSSLEEPGHQCTEL.

Belongs to the major facilitator superfamily.

It localises to the membrane. The polypeptide is Hippocampus abundant transcript-like protein 1 (Bos taurus (Bovine)).